The sequence spans 36 residues: Pancreatic polypeptide (36 aa).

Residue Y36 is modified to Tyrosine amide.

Belongs to the NPY family.

Its subcellular location is the secreted. In terms of biological role, hormone secreted by pancreatic cells that acts as a regulator of pancreatic and gastrointestinal functions. This chain is Pancreatic polypeptide (PPY), found in Anser anser anser (Western greylag goose).